The chain runs to 1033 residues: Isoleucine--tRNA ligase 2 (1033 aa).

The 'HIGH' region motif lies at 47-57 (PTANGLPHVGH). The 'KMSKS' region motif lies at 590–594 (KMSKS). ATP is bound at residue K593.

The protein belongs to the class-I aminoacyl-tRNA synthetase family. IleS type 2 subfamily. In terms of assembly, monomer. It depends on Zn(2+) as a cofactor.

It localises to the cytoplasm. The catalysed reaction is tRNA(Ile) + L-isoleucine + ATP = L-isoleucyl-tRNA(Ile) + AMP + diphosphate. Its function is as follows. Catalyzes the attachment of isoleucine to tRNA(Ile). As IleRS can inadvertently accommodate and process structurally similar amino acids such as valine, to avoid such errors it has two additional distinct tRNA(Ile)-dependent editing activities. One activity is designated as 'pretransfer' editing and involves the hydrolysis of activated Val-AMP. The other activity is designated 'posttransfer' editing and involves deacylation of mischarged Val-tRNA(Ile). This is Isoleucine--tRNA ligase 2 from Bacillus thuringiensis subsp. konkukian (strain 97-27).